The chain runs to 568 residues: CDK5 and ABL1 enzyme substrate 1 (568 aa).

Low complexity predominate over residues M1–G31. Disordered stretches follow at residues M1–R94 and P130–L169. The segment at M1 to S98 is interaction with TDRD7. Over residues Q33–E45 the composition is skewed to pro residues. Residues P46–R56 are compositionally biased toward basic and acidic residues. Residues P140–S427 are interaction with CDK3. A Phosphoserine modification is found at S248. At S274 the chain carries Phosphoserine; by CDK2 and CDK3. The residue at position 350 (T350) is a Phosphothreonine.

The protein belongs to the cyclin family. Found in a complex with p53/TP53. Found in a number of complexes with CDK2, CDK3, CDK5, ABL1, TDRD7, CDK17, CCNA1, CCNE1 and TP73. Interacts with CDK2, CDK3, CDK5, ABL1 and TDRD7. In terms of processing, phosphorylated on Ser-274 by CCNE1/CDK3. Phosphorylated on serine/threonine residues by CDK5 and on tyrosine residues by ABL1. Also phosphorylated in vitro by CCNA1/CDK2, CCNE1/CDK2, CCNA1/CDK3 and CCNE1/CDK3. Ubiquitous. Expressed in postnatal day 1 (P1), in postmitotic neurons of the subplate, cortex (V/VI) and marginal zone; in postnatal day 7 (P7), in all layers of the cerebral cortex and in the CA1 and CA2 regions of the hippocampus (at protein level). Highly expressed in brain, kidney, liver and lung.

It localises to the nucleus. The protein resides in the cytoplasm. The protein localises to the cell projection. Its subcellular location is the growth cone. Its function is as follows. Cyclin-dependent kinase binding protein. Enhances cyclin-dependent kinase tyrosine phosphorylation by nonreceptor tyrosine kinases, such as that of CDK5 by activated ABL1, which leads to increased CDK5 activity and is critical for neuronal development, and that of CDK2 by WEE1, which leads to decreased CDK2 activity and growth inhibition. Positively affects neuronal outgrowth. Plays a role as a regulator for p53/p73-induced cell death. This Mus musculus (Mouse) protein is CDK5 and ABL1 enzyme substrate 1 (Cables1).